A 314-amino-acid polypeptide reads, in one-letter code: UDP-3-O-acyl-N-acetylglucosamine deacetylase (314 aa).

Positions 82, 239, and 243 each coordinate Zn(2+). Residue H266 is the Proton donor of the active site.

Belongs to the LpxC family. Requires Zn(2+) as cofactor.

It carries out the reaction a UDP-3-O-[(3R)-3-hydroxyacyl]-N-acetyl-alpha-D-glucosamine + H2O = a UDP-3-O-[(3R)-3-hydroxyacyl]-alpha-D-glucosamine + acetate. The protein operates within glycolipid biosynthesis; lipid IV(A) biosynthesis; lipid IV(A) from (3R)-3-hydroxytetradecanoyl-[acyl-carrier-protein] and UDP-N-acetyl-alpha-D-glucosamine: step 2/6. Catalyzes the hydrolysis of UDP-3-O-myristoyl-N-acetylglucosamine to form UDP-3-O-myristoylglucosamine and acetate, the committed step in lipid A biosynthesis. The polypeptide is UDP-3-O-acyl-N-acetylglucosamine deacetylase (Myxococcus xanthus (strain DK1622)).